A 518-amino-acid chain; its full sequence is Integrator complex subunit 14 (518 aa).

Residues 2–204 enclose the VWFA domain; the sequence is PTVVVMDVSL…KNVQSMFGKL (203 aa). Mg(2+) contacts are provided by S10, S12, and T86.

It belongs to the Integrator subunit 14 family. As to quaternary structure, component of the Integrator complex, composed of core subunits INTS1, INTS2, INTS3, INTS4, INTS5, INTS6, INTS7, INTS8, INTS9/RC74, INTS10, INTS11/CPSF3L, INTS12, INTS13, INTS14 and INTS15. The core complex associates with protein phosphatase 2A subunits PPP2CA and PPP2R1A, to form the Integrator-PP2A (INTAC) complex. INTS14 is part of the tail subcomplex, composed of INTS10, INTS13, INTS14 and INTS15.

It is found in the nucleus. In terms of biological role, component of the integrator complex, a multiprotein complex that terminates RNA polymerase II (Pol II) transcription in the promoter-proximal region of genes. The integrator complex provides a quality checkpoint during transcription elongation by driving premature transcription termination of transcripts that are unfavorably configured for transcriptional elongation: the complex terminates transcription by (1) catalyzing dephosphorylation of the C-terminal domain (CTD) of Pol II subunit POLR2A/RPB1 and SUPT5H/SPT5, (2) degrading the exiting nascent RNA transcript via endonuclease activity and (3) promoting the release of Pol II from bound DNA. The integrator complex is also involved in terminating the synthesis of non-coding Pol II transcripts, such as enhancer RNAs (eRNAs), small nuclear RNAs (snRNAs), telomerase RNAs and long non-coding RNAs (lncRNAs). Within the integrator complex, INTS14 is part of the integrator tail module that acts as a platform for the recruitment of transcription factors at promoters. The protein is Integrator complex subunit 14 of Xenopus tropicalis (Western clawed frog).